A 1837-amino-acid chain; its full sequence is Nucleoporin nup211 (1837 aa).

Coiled coils occupy residues 59 to 378 (EVNY…YDEI), 415 to 519 (YKQK…ELDL), and 559 to 625 (VFRN…QLRY). A Phosphothreonine modification is found at T650. Coiled-coil stretches lie at residues 661–1163 (EQTS…NKLL), 1222–1637 (LDNR…ENTH), and 1675–1712 (KAKISVYEKKTRDLQNKITQLEETIENLNKQLSNPEKT). The interval 1464–1521 (KDSNHQLQESASSDAEQITKEQFEQLKSEKERTEKELADSKNELEHLQSEAVDADGKT) is disordered. Positions 1468–1479 (HQLQESASSDAE) are enriched in polar residues. A compositionally biased stretch (basic and acidic residues) spans 1480 to 1521 (QITKEQFEQLKSEKERTEKELADSKNELEHLQSEAVDADGKT). S1558 carries the phosphoserine modification. Phosphothreonine is present on T1560. S1563 carries the phosphoserine modification. 2 disordered regions span residues 1602–1642 (EKEK…NIDD) and 1700–1837 (ENLN…KKAK). Residues 1617 to 1628 (KSQRIKELEEQA) show a composition bias toward basic and acidic residues. 4 stretches are compositionally biased toward polar residues: residues 1700 to 1730 (ENLNKQLSNPEKTDESTSSVTETKPVTSKPT), 1753 to 1763 (KSLSARLQGTG), 1795 to 1814 (IATSKNAAQNAKELSSTAKS), and 1827 to 1837 (GGSSSNQKKAK).

Its subcellular location is the cytoplasm. The protein localises to the nucleus. Functionally, functions as a component of the nuclear pore complex (NPC). NPC components, collectively referred to as nucleoporins (NUPs), can play the role of both NPC structural components and of docking or interaction partners for transiently associated nuclear transport factors. Active directional transport is assured by both, a Phe-Gly (FG) repeat affinity gradient for these transport factors across the NPC and a transport cofactor concentration gradient across the nuclear envelope. The sequence is that of Nucleoporin nup211 (nup211) from Schizosaccharomyces pombe (strain 972 / ATCC 24843) (Fission yeast).